A 128-amino-acid polypeptide reads, in one-letter code: Aspartate 1-decarboxylase (128 aa).

The active-site Schiff-base intermediate with substrate; via pyruvic acid is the Ser-25. Ser-25 is modified (pyruvic acid (Ser)). Thr-57 provides a ligand contact to substrate. The active-site Proton donor is Tyr-58. 73–75 lines the substrate pocket; sequence GSA.

Belongs to the PanD family. Heterooctamer of four alpha and four beta subunits. Requires pyruvate as cofactor. Post-translationally, is synthesized initially as an inactive proenzyme, which is activated by self-cleavage at a specific serine bond to produce a beta-subunit with a hydroxyl group at its C-terminus and an alpha-subunit with a pyruvoyl group at its N-terminus.

The protein localises to the cytoplasm. It carries out the reaction L-aspartate + H(+) = beta-alanine + CO2. Its pathway is cofactor biosynthesis; (R)-pantothenate biosynthesis; beta-alanine from L-aspartate: step 1/1. Catalyzes the pyruvoyl-dependent decarboxylation of aspartate to produce beta-alanine. The polypeptide is Aspartate 1-decarboxylase (Paraburkholderia phymatum (strain DSM 17167 / CIP 108236 / LMG 21445 / STM815) (Burkholderia phymatum)).